A 736-amino-acid polypeptide reads, in one-letter code: Gephyrin (736 aa).

The interval 14 to 166 (QIRVGVLTVS…FILPALPHAI (153 aa)) is MPT Mo-transferase. Positions 140 to 316 (LIINLPGSKK…VDITKVARRH (177 aa)) are interaction with GABARAP. 2 disordered regions span residues 181–232 (DELE…DSSS) and 260–290 (TASL…PKVQ). Residues 187–199 (PSPPPPLSPPPTT) show a composition bias toward pro residues. A phosphoserine mark is found at Ser-188 and Ser-194. Residue Thr-198 is modified to Phosphothreonine. Ser-200 is modified (phosphoserine). A lipid anchor (S-palmitoyl cysteine) is attached at Cys-212. Positions 261-290 (ASLSTTPSESPRAQATSRLSTASCPTPKVQ) are enriched in polar residues. The residue at position 262 (Ser-262) is a Phosphoserine. Phosphothreonine occurs at positions 265 and 266. Residues Ser-268 and Ser-270 each carry the phosphoserine modification. Cys-284 is lipidated: S-palmitoyl cysteine. A Phosphoserine modification is found at Ser-305. Positions 326–736 (MDKAFITVLE…VVDVMVIGRL (411 aa)) are MPT adenylyltransferase.

In the N-terminal section; belongs to the MoaB/Mog family. This sequence in the C-terminal section; belongs to the MoeA family. In terms of assembly, homotrimer, homodimer and homooligomer. Interacts with GABARAP. Interacts with SRGAP2 (via SH3 domain). Interacts with GABRA3. Interacts with GLRB. GABRA3 and GLRB occupy overlapping binding sites. Interacts with ARHGAP32; IQSEC3, INSYN1 and INSYN2A. Mg(2+) serves as cofactor. Palmitoylated. Palmitoylation is stimulated by GABA type A receptors activity. Palmitoylation by ZDHHC12 regulates clustering at synapses.

It is found in the postsynaptic cell membrane. The protein localises to the cell membrane. Its subcellular location is the cytoplasm. The protein resides in the cytosol. It localises to the cytoskeleton. It is found in the cell projection. The protein localises to the dendrite. Its subcellular location is the postsynaptic density. It carries out the reaction molybdopterin + ATP + H(+) = adenylyl-molybdopterin + diphosphate. The enzyme catalyses adenylyl-molybdopterin + molybdate = Mo-molybdopterin + AMP + H(+). The protein operates within cofactor biosynthesis; molybdopterin biosynthesis. With respect to regulation, inhibited by copper and tungsten. In terms of biological role, microtubule-associated protein involved in membrane protein-cytoskeleton interactions. It is thought to anchor the inhibitory glycine receptor (GLYR) to subsynaptic microtubules. Acts as a major instructive molecule at inhibitory synapses, where it also clusters GABA type A receptors. Its function is as follows. Also has a catalytic activity and catalyzes two steps in the biosynthesis of the molybdenum cofactor. In the first step, molybdopterin is adenylated. Subsequently, molybdate is inserted into adenylated molybdopterin and AMP is released. This Homo sapiens (Human) protein is Gephyrin.